A 314-amino-acid chain; its full sequence is Ferrochelatase (314 aa).

The Fe cation site is built by His-184 and Glu-259.

It belongs to the ferrochelatase family.

It is found in the cytoplasm. It catalyses the reaction heme b + 2 H(+) = protoporphyrin IX + Fe(2+). It functions in the pathway porphyrin-containing compound metabolism; protoheme biosynthesis; protoheme from protoporphyrin-IX: step 1/1. Catalyzes the ferrous insertion into protoporphyrin IX. This is Ferrochelatase from Chlamydia trachomatis serovar A (strain ATCC VR-571B / DSM 19440 / HAR-13).